Reading from the N-terminus, the 351-residue chain is Cobalt-precorrin-5B C(1)-methyltransferase (351 aa).

The protein belongs to the CbiD family.

The catalysed reaction is Co-precorrin-5B + S-adenosyl-L-methionine = Co-precorrin-6A + S-adenosyl-L-homocysteine. The protein operates within cofactor biosynthesis; adenosylcobalamin biosynthesis; cob(II)yrinate a,c-diamide from sirohydrochlorin (anaerobic route): step 6/10. In terms of biological role, catalyzes the methylation of C-1 in cobalt-precorrin-5B to form cobalt-precorrin-6A. In Thermosipho africanus (strain TCF52B), this protein is Cobalt-precorrin-5B C(1)-methyltransferase.